We begin with the raw amino-acid sequence, 330 residues long: Lymphocyte-specific protein 1 (330 aa).

Composition is skewed to basic and acidic residues over residues 1–20 (MAEAAIDPRCEEQEELHAED) and 37–62 (AREQRQRERERQLQDQDKDKEDDGGH). 2 disordered regions span residues 1-246 (MAEA…SIEL) and 281-302 (DMSKKSLWEQKGGSKISSTIKS). Residues 66 to 77 (QPGQQTLISLKS) show a composition bias toward polar residues. A phosphoserine; by CK2 mark is found at serine 77 and serine 78. Residues 113 to 135 (QSERPEEKQTEESSHQAKVHLEE) are compositionally biased toward basic and acidic residues. Threonine 166 carries the phosphothreonine modification. Phosphoserine occurs at positions 168, 179, 180, and 184. Polar residues-rich tracts occupy residues 206-215 (VKKSQPTLPI) and 223-242 (QQYTQATESSGRTPKLSRQP). The residue at position 243 (serine 243) is a Phosphoserine; by MAPKAPK2. Residues 291–302 (KGGSKISSTIKS) show a composition bias toward low complexity. Lysine 318 carries the N6-acetyllysine modification.

Phosphorylated by casein kinase II, protein kinase C and MAPKAPK2. Phosphorylation by PKC induces translocation from membrane to cytoplasm. Phosphorylation by MAPKAPK2 may regulate neutrophil chemotaxis. As to expression, isoform 1 is expressed in normal mouse B and T-lymphocytes and in transformed B-cells but not (or in smaller amounts) in nine T-lymphoma lines tested. Isoform 2 is expressed in non-lymphoid cell lines (myocytes, stromal cells, fibroblasts).

The protein localises to the cell membrane. May play a role in mediating neutrophil activation and chemotaxis. The polypeptide is Lymphocyte-specific protein 1 (Lsp1) (Mus musculus (Mouse)).